A 368-amino-acid chain; its full sequence is Chorismate synthase (368 aa).

2 residues coordinate NADP(+): Arg-48 and Arg-54. FMN contacts are provided by residues 131–133 (RSS), 243–244 (NA), Gly-292, 307–311 (KPTSS), and Arg-333.

This sequence belongs to the chorismate synthase family. Homotetramer. Requires FMNH2 as cofactor.

The enzyme catalyses 5-O-(1-carboxyvinyl)-3-phosphoshikimate = chorismate + phosphate. It functions in the pathway metabolic intermediate biosynthesis; chorismate biosynthesis; chorismate from D-erythrose 4-phosphate and phosphoenolpyruvate: step 7/7. Catalyzes the anti-1,4-elimination of the C-3 phosphate and the C-6 proR hydrogen from 5-enolpyruvylshikimate-3-phosphate (EPSP) to yield chorismate, which is the branch point compound that serves as the starting substrate for the three terminal pathways of aromatic amino acid biosynthesis. This reaction introduces a second double bond into the aromatic ring system. The sequence is that of Chorismate synthase from Nitrobacter winogradskyi (strain ATCC 25391 / DSM 10237 / CIP 104748 / NCIMB 11846 / Nb-255).